The primary structure comprises 342 residues: Dihydroorotase (342 aa).

2 residues coordinate Zn(2+): H13 and H15. Residues 15-17 (HLR) and N41 each bind substrate. K98, H135, and H173 together coordinate Zn(2+). Position 98 is an N6-carboxylysine (K98). Substrate is bound at residue H135. A substrate-binding site is contributed by L218. D246 provides a ligand contact to Zn(2+). The active site involves D246. Residues H250 and A262 each contribute to the substrate site.

Belongs to the metallo-dependent hydrolases superfamily. DHOase family. Class II DHOase subfamily. Homodimer. Zn(2+) serves as cofactor.

It catalyses the reaction (S)-dihydroorotate + H2O = N-carbamoyl-L-aspartate + H(+). It functions in the pathway pyrimidine metabolism; UMP biosynthesis via de novo pathway; (S)-dihydroorotate from bicarbonate: step 3/3. Functionally, catalyzes the reversible cyclization of carbamoyl aspartate to dihydroorotate. This chain is Dihydroorotase, found in Aliivibrio fischeri (strain ATCC 700601 / ES114) (Vibrio fischeri).